Reading from the N-terminus, the 218-residue chain is Phosphatidylserine decarboxylase proenzyme (218 aa).

Residue serine 182 is the Schiff-base intermediate with substrate; via pyruvic acid of the active site. The residue at position 182 (serine 182) is a Pyruvic acid (Ser); by autocatalysis.

Belongs to the phosphatidylserine decarboxylase family. PSD-A subfamily. Heterodimer of a large membrane-associated beta subunit and a small pyruvoyl-containing alpha subunit. It depends on pyruvate as a cofactor. In terms of processing, is synthesized initially as an inactive proenzyme. Formation of the active enzyme involves a self-maturation process in which the active site pyruvoyl group is generated from an internal serine residue via an autocatalytic post-translational modification. Two non-identical subunits are generated from the proenzyme in this reaction, and the pyruvate is formed at the N-terminus of the alpha chain, which is derived from the carboxyl end of the proenzyme. The post-translation cleavage follows an unusual pathway, termed non-hydrolytic serinolysis, in which the side chain hydroxyl group of the serine supplies its oxygen atom to form the C-terminus of the beta chain, while the remainder of the serine residue undergoes an oxidative deamination to produce ammonia and the pyruvoyl prosthetic group on the alpha chain.

It is found in the cell membrane. It carries out the reaction a 1,2-diacyl-sn-glycero-3-phospho-L-serine + H(+) = a 1,2-diacyl-sn-glycero-3-phosphoethanolamine + CO2. Its pathway is phospholipid metabolism; phosphatidylethanolamine biosynthesis; phosphatidylethanolamine from CDP-diacylglycerol: step 2/2. Functionally, catalyzes the formation of phosphatidylethanolamine (PtdEtn) from phosphatidylserine (PtdSer). This chain is Phosphatidylserine decarboxylase proenzyme, found in Oleidesulfovibrio alaskensis (strain ATCC BAA-1058 / DSM 17464 / G20) (Desulfovibrio alaskensis).